We begin with the raw amino-acid sequence, 199 residues long: MYTRPLARLIEELQRLPGIGSKTAQRLALHLINRPAGEIEALAKALLEAKQTVRHCSICFNWSAEDPCEICRSPQRDPSLWCVVADVKDLIAMERTREFKGLYHVLGGLISPMNGIGVDQLHIRELVARVAREKPQELIFAISPSVEGEVTMHVVKDYLKPVAPTLRMTRLAFGLPMGSELEYADEVTLARALEARQEL.

The C4-type zinc-finger motif lies at 56-71 (CSICFNWSAEDPCEIC). In terms of domain architecture, Toprim spans 79–174 (SLWCVVADVK…TLRMTRLAFG (96 aa)).

Belongs to the RecR family.

May play a role in DNA repair. It seems to be involved in an RecBC-independent recombinational process of DNA repair. It may act with RecF and RecO. This is Recombination protein RecR from Synechococcus sp. (strain JA-2-3B'a(2-13)) (Cyanobacteria bacterium Yellowstone B-Prime).